The chain runs to 210 residues: CLAVATA3/ESR (CLE)-related protein 4D (210 aa).

The signal sequence occupies residues 1-21; that stretch reads MAKNAMLCLLILSVVLALAFA. The tract at residues 21 to 83 is required for secretion from the host cytoplasm to the host apoplasm; sequence ATNKKDDEEP…SNQLPNNNWM (63 aa). N-linked (GlcNAc...) asparagine glycans are attached at residues Asn32 and Asn59. The tract at residues 115–210 is disordered; that stretch reads RRKTGTHSQR…APAGPDPIHH (96 aa). Basic and acidic residues-rich tracts occupy residues 125–137, 144–158, 165–179, and 186–200; these read HHEE…EKRG, PIHH…EKRG, and PIHH…EKRV. One copy of the A-1 repeat lies at 127-135; sequence EETTLEQEK. The 4 X approximate repeat A stretch occupies residues 129–198; it reads TTLEQEKRGA…HQDTKFEQEK (70 aa). The CLE-1 repeat unit spans residues 136–147; it reads RGAPAGPDPIHH. The tract at residues 136–210 is 4 X approximate repeat CLE; the sequence is RGAPAGPDPI…APAGPDPIHH (75 aa). The stretch at 148–156 is one A-2 repeat; sequence QDTTFEQEK. One copy of the CLE-2 repeat lies at 157–168; that stretch reads RGAPAGPDPIHH. The A-3 repeat unit spans residues 169 to 177; the sequence is QDTTLEQEK. One copy of the CLE-3 repeat lies at 178 to 189; it reads RVAGAGPDPIHH. The A-4 repeat unit spans residues 190–198; the sequence is QDTKFEQEK. Residues 199-210 form a CLE-4 repeat; sequence RGAPAGPDPIHH.

This sequence belongs to the CLV3/ESR signal peptide family. In terms of tissue distribution, highly expressed exclusively within the dorsal esophageal gland cell during syncytium formation in host plants.

It localises to the secreted. It is found in the host cytoplasm. The protein resides in the host extracellular space. Its subcellular location is the extracellular space. The protein localises to the apoplast. Functionally, mimics host plant CLE extracellular signal peptides that regulate cell fate. May play a role in the differentiation or division of feeding cells (syncytia) induced in plant roots during infection. The polypeptide is CLAVATA3/ESR (CLE)-related protein 4D (CLE-4D) (Globodera rostochiensis (Golden nematode worm)).